The primary structure comprises 114 residues: Large ribosomal subunit protein uL22 (114 aa).

It belongs to the universal ribosomal protein uL22 family. In terms of assembly, part of the 50S ribosomal subunit.

Its function is as follows. This protein binds specifically to 23S rRNA; its binding is stimulated by other ribosomal proteins, e.g. L4, L17, and L20. It is important during the early stages of 50S assembly. It makes multiple contacts with different domains of the 23S rRNA in the assembled 50S subunit and ribosome. In terms of biological role, the globular domain of the protein is located near the polypeptide exit tunnel on the outside of the subunit, while an extended beta-hairpin is found that lines the wall of the exit tunnel in the center of the 70S ribosome. This chain is Large ribosomal subunit protein uL22, found in Streptococcus uberis (strain ATCC BAA-854 / 0140J).